The following is a 752-amino-acid chain: Primary amine oxidase (752 aa).

Positions 1–27 (MAILSPRKTALALAVALSCAWQSPAFA) are cleaved as a signal peptide. Residues 408–419 (YLDSGDYGMGTL) and 490–495 (VGNYDY) each bind substrate. The active-site Proton acceptor is the Asp-410. Residue Tyr-493 is the Schiff-base intermediate with substrate; via topaquinone of the active site. Tyr-493 carries the 2',4',5'-topaquinone modification. Residues His-551 and His-553 each coordinate Cu cation. Positions 560, 561, 562, 600, 694, 697, 699, and 705 each coordinate Ca(2+). Position 560 (Asp-560) interacts with Mn(2+). Position 562 (Asp-562) interacts with Mn(2+). Asp-705 serves as a coordination point for Mn(2+). His-716 contributes to the Cu cation binding site.

The protein belongs to the copper/topaquinone oxidase family. Homodimer. The cofactor is Cu cation. It depends on Ca(2+) as a cofactor. Requires L-topaquinone as cofactor. Mn(2+) is required as a cofactor. In terms of processing, topaquinone (TPQ) is generated by copper-dependent autoxidation of a specific tyrosyl residue.

It localises to the periplasm. The catalysed reaction is a primary methyl amine + O2 + H2O = an aldehyde + H2O2 + NH4(+). Active on tyramine, tryptamine, beta-phenethylamine and dopamine. This Klebsiella michiganensis (strain ATCC 8724 / DSM 4798 / JCM 20051 / NBRC 3318 / NRRL B-199 / KCTC 1686 / BUCSAV 143 / CCM 1901) protein is Primary amine oxidase (maoA).